A 205-amino-acid chain; its full sequence is Holliday junction branch migration complex subunit RuvA (205 aa).

The tract at residues 1 to 63 is domain I; sequence MIGMLRGHVE…QDAITLFGFG (63 aa). Positions 64-142 are domain II; sequence TLASKRMFLQ…LSQIEGSSAT (79 aa). Residues 143–145 form a flexible linker region; the sequence is AST. The tract at residues 146 to 205 is domain III; sequence PEDTGAEQVVEGLMSLGWHQQDAAHAVQTVCADNQIETPLNAKDVPRVLKLALTSLDRGR.

Belongs to the RuvA family. As to quaternary structure, homotetramer. Forms an RuvA(8)-RuvB(12)-Holliday junction (HJ) complex. HJ DNA is sandwiched between 2 RuvA tetramers; dsDNA enters through RuvA and exits via RuvB. An RuvB hexamer assembles on each DNA strand where it exits the tetramer. Each RuvB hexamer is contacted by two RuvA subunits (via domain III) on 2 adjacent RuvB subunits; this complex drives branch migration. In the full resolvosome a probable DNA-RuvA(4)-RuvB(12)-RuvC(2) complex forms which resolves the HJ.

The protein localises to the cytoplasm. The RuvA-RuvB-RuvC complex processes Holliday junction (HJ) DNA during genetic recombination and DNA repair, while the RuvA-RuvB complex plays an important role in the rescue of blocked DNA replication forks via replication fork reversal (RFR). RuvA specifically binds to HJ cruciform DNA, conferring on it an open structure. The RuvB hexamer acts as an ATP-dependent pump, pulling dsDNA into and through the RuvAB complex. HJ branch migration allows RuvC to scan DNA until it finds its consensus sequence, where it cleaves and resolves the cruciform DNA. The chain is Holliday junction branch migration complex subunit RuvA from Bifidobacterium adolescentis (strain ATCC 15703 / DSM 20083 / NCTC 11814 / E194a).